A 387-amino-acid chain; its full sequence is Mitochondrial import inner membrane translocase subunit TIM50 (387 aa).

Residues 1 to 26 constitute a mitochondrion transit peptide; it reads MSAVSVYPMCVRASRGLLRLRQGARC. Residues 27–100 are Mitochondrial matrix-facing; that stretch reads STAPPLLDVV…QKENTAYAKK (74 aa). Residues 61 to 93 are disordered; that stretch reads LQQQQKSQEQPPPEGEDSGHKQDEQGEDKKQKE. Positions 77–93 are enriched in basic and acidic residues; the sequence is DSGHKQDEQGEDKKQKE. The chain crosses the membrane as a helical span at residues 101–121; sequence MVLRLAGIMGLGGTVGIVYIF. The Mitochondrial intermembrane segment spans residues 122 to 387; the sequence is GSNSVDEQGN…AGRFWSRKQQ (266 aa). The FCP1 homology domain occupies 178-321; it reads YYQPPYTLVL…YDLAAFLKTI (144 aa).

It belongs to the TIM50 family. In terms of assembly, component of the TIM23 complex at least composed of timm23, timm17 and timm50.

The protein resides in the mitochondrion inner membrane. Essential component of the TIM23 complex, a complex that mediates the translocation of transit peptide-containing proteins across the mitochondrial inner membrane. This Danio rerio (Zebrafish) protein is Mitochondrial import inner membrane translocase subunit TIM50 (timm50).